We begin with the raw amino-acid sequence, 590 residues long: Aspartate--tRNA ligase (590 aa).

Glu172 provides a ligand contact to L-aspartate. Positions 196–199 are aspartate; it reads QLFK. Arg218 provides a ligand contact to L-aspartate. ATP contacts are provided by residues 218–220 and Gln227; that span reads RDE. His449 serves as a coordination point for L-aspartate. Glu483 serves as a coordination point for ATP. Arg490 provides a ligand contact to L-aspartate. 535–538 contributes to the ATP binding site; that stretch reads GLDR.

Belongs to the class-II aminoacyl-tRNA synthetase family. Type 1 subfamily. Homodimer.

The protein resides in the cytoplasm. The catalysed reaction is tRNA(Asp) + L-aspartate + ATP = L-aspartyl-tRNA(Asp) + AMP + diphosphate. Catalyzes the attachment of L-aspartate to tRNA(Asp) in a two-step reaction: L-aspartate is first activated by ATP to form Asp-AMP and then transferred to the acceptor end of tRNA(Asp). This is Aspartate--tRNA ligase from Mannheimia succiniciproducens (strain KCTC 0769BP / MBEL55E).